Consider the following 167-residue polypeptide: SsrA-binding protein (167 aa).

It belongs to the SmpB family.

Its subcellular location is the cytoplasm. Its function is as follows. Required for rescue of stalled ribosomes mediated by trans-translation. Binds to transfer-messenger RNA (tmRNA), required for stable association of tmRNA with ribosomes. tmRNA and SmpB together mimic tRNA shape, replacing the anticodon stem-loop with SmpB. tmRNA is encoded by the ssrA gene; the 2 termini fold to resemble tRNA(Ala) and it encodes a 'tag peptide', a short internal open reading frame. During trans-translation Ala-aminoacylated tmRNA acts like a tRNA, entering the A-site of stalled ribosomes, displacing the stalled mRNA. The ribosome then switches to translate the ORF on the tmRNA; the nascent peptide is terminated with the 'tag peptide' encoded by the tmRNA and targeted for degradation. The ribosome is freed to recommence translation, which seems to be the essential function of trans-translation. The chain is SsrA-binding protein from Stenotrophomonas maltophilia (strain R551-3).